A 127-amino-acid polypeptide reads, in one-letter code: Stationary phase protein 3 (127 aa).

2 consecutive transmembrane segments (helical) span residues 29–49 and 63–83; these read LFLFLFVFVFVFIFVYFFYVI and ANSIWYYLSIINIFFPLCFFL. Asparagine 86 carries an N-linked (GlcNAc...) asparagine glycan.

It is found in the membrane. Required for survival during stationary phase. The protein is Stationary phase protein 3 (SPG3) of Saccharomyces cerevisiae (strain ATCC 204508 / S288c) (Baker's yeast).